Consider the following 368-residue polypeptide: Histidinol-phosphate aminotransferase (368 aa).

The residue at position 228 (K228) is an N6-(pyridoxal phosphate)lysine.

This sequence belongs to the class-II pyridoxal-phosphate-dependent aminotransferase family. Histidinol-phosphate aminotransferase subfamily. As to quaternary structure, homodimer. Requires pyridoxal 5'-phosphate as cofactor.

It carries out the reaction L-histidinol phosphate + 2-oxoglutarate = 3-(imidazol-4-yl)-2-oxopropyl phosphate + L-glutamate. It functions in the pathway amino-acid biosynthesis; L-histidine biosynthesis; L-histidine from 5-phospho-alpha-D-ribose 1-diphosphate: step 7/9. The polypeptide is Histidinol-phosphate aminotransferase (hisC) (Methylobacillus flagellatus).